We begin with the raw amino-acid sequence, 463 residues long: Asparagine--tRNA ligase (463 aa).

The protein belongs to the class-II aminoacyl-tRNA synthetase family. Homodimer.

The protein resides in the cytoplasm. It catalyses the reaction tRNA(Asn) + L-asparagine + ATP = L-asparaginyl-tRNA(Asn) + AMP + diphosphate + H(+). In Bacillus cytotoxicus (strain DSM 22905 / CIP 110041 / 391-98 / NVH 391-98), this protein is Asparagine--tRNA ligase.